Here is a 289-residue protein sequence, read N- to C-terminus: Diaminopimelate epimerase (289 aa).

Residues Asn13, Gln47, and Asn67 each coordinate substrate. Cys76 acts as the Proton donor in catalysis. Substrate contacts are provided by residues Gly77 to Asn78, Asn167, Asn200, and Glu218 to Arg219. Cys227 functions as the Proton acceptor in the catalytic mechanism. Gly228 to Thr229 serves as a coordination point for substrate.

This sequence belongs to the diaminopimelate epimerase family. Homodimer.

It localises to the cytoplasm. The catalysed reaction is (2S,6S)-2,6-diaminopimelate = meso-2,6-diaminopimelate. It participates in amino-acid biosynthesis; L-lysine biosynthesis via DAP pathway; DL-2,6-diaminopimelate from LL-2,6-diaminopimelate: step 1/1. Catalyzes the stereoinversion of LL-2,6-diaminopimelate (L,L-DAP) to meso-diaminopimelate (meso-DAP), a precursor of L-lysine and an essential component of the bacterial peptidoglycan. In Burkholderia pseudomallei (strain 668), this protein is Diaminopimelate epimerase.